A 469-amino-acid chain; its full sequence is Flap endonuclease 1-B (469 aa).

An N-domain region spans residues 1 to 103; the sequence is MGIKGLTGLL…GVLSKRLERR (103 aa). Mg(2+) is bound at residue Asp32. Residues Arg45 and Arg69 each coordinate DNA. Asp85, Glu157, Glu159, Asp183, and Asp185 together coordinate Mg(2+). Residues 121–257 are I-domain; that stretch reads DVDRFSRRTV…KSALKLIREY (137 aa). Glu157 is a DNA binding site. DNA-binding residues include Gly235 and Asp237. Asp237 contacts Mg(2+). A disordered region spans residues 274–354; sequence QKAAQAAVES…GGMQIPEEWP (81 aa). 2 stretches are compositionally biased toward acidic residues: residues 282-295 and 302-317; these read ESDEESEHEEEDEP and EMPDPVEEDQDGEEEA. The segment covering 326-342 has biased composition (basic residues); the sequence is PKKKKASSKTKEKRKGK. Residues 412–420 are interaction with PCNA; sequence QQGRLDGFF. A disordered region spans residues 424-469; the sequence is PKEKAAAPAPVGKAKGKGKIDAKAKGTKRKVDEKAESSAGKKPRKK. Basic and acidic residues predominate over residues 441-459; the sequence is GKIDAKAKGTKRKVDEKAE.

It belongs to the XPG/RAD2 endonuclease family. FEN1 subfamily. As to quaternary structure, interacts with PCNA. Three molecules of FEN1 bind to one PCNA trimer with each molecule binding to one PCNA monomer. PCNA stimulates the nuclease activity without altering cleavage specificity. Mg(2+) serves as cofactor. In terms of processing, phosphorylated. Phosphorylation upon DNA damage induces relocalization to the nuclear plasma.

The protein resides in the nucleus. The protein localises to the nucleolus. Its subcellular location is the nucleoplasm. It localises to the mitochondrion. Its function is as follows. Structure-specific nuclease with 5'-flap endonuclease and 5'-3' exonuclease activities involved in DNA replication and repair. During DNA replication, cleaves the 5'-overhanging flap structure that is generated by displacement synthesis when DNA polymerase encounters the 5'-end of a downstream Okazaki fragment. It enters the flap from the 5'-end and then tracks to cleave the flap base, leaving a nick for ligation. Also involved in the long patch base excision repair (LP-BER) pathway, by cleaving within the apurinic/apyrimidinic (AP) site-terminated flap. Acts as a genome stabilization factor that prevents flaps from equilibrating into structures that lead to duplications and deletions. Also possesses 5'-3' exonuclease activity on nicked or gapped double-stranded DNA, and exhibits RNase H activity. Also involved in replication and repair of rDNA and in repairing mitochondrial DNA. This Laccaria bicolor (strain S238N-H82 / ATCC MYA-4686) (Bicoloured deceiver) protein is Flap endonuclease 1-B.